Here is a 381-residue protein sequence, read N- to C-terminus: Phenylalanine dehydrogenase (381 aa).

Arginine 55 lines the NAD(+) pocket. Lysine 79 serves as a coordination point for L-phenylalanine. The active site involves lysine 91. NAD(+) is bound by residues aspartate 126, serine 157, threonine 161, 191–197 (GLGKVGY), 214–215 (DI), 254–255 (AM), and 275–277 (SAN). Residue asparagine 277 coordinates L-phenylalanine.

Belongs to the Glu/Leu/Phe/Val dehydrogenases family.

It carries out the reaction L-phenylalanine + NAD(+) + H2O = 3-phenylpyruvate + NH4(+) + NADH + H(+). It participates in amino-acid biosynthesis; L-phenylalanine biosynthesis; L-phenylalanine from phenylpyruvate (PDH route): step 1/1. Functionally, catalyzes the reversible NAD(+)-dependent oxidative deamination of L-phenylalanine to phenylpyruvate. This is Phenylalanine dehydrogenase from Lysinibacillus sphaericus (Bacillus sphaericus).